The primary structure comprises 253 residues: MLAKRIIACLDVKDGRVVKGTNFENLRDSGDPVELGKFYSEIGIDELVFLDITASVEKRKTMLELVEKVAEQIDIPFTVGGGIHDFETASELILRGADKVSINTAAVGNPSLITQIAQTFGSQAVVVAIDAKRVDGEFMVFTYSGKKNTGILLRDWVVEVERRGAGEILLTSIDRDGTKSGYDTEMIRFVRPLTTLPIIASGGAGKMEHFLEAFLAGADAALAASVFHFREIDVRELKEYLKKHGVNVRLEGL.

Active-site residues include D11 and D130.

This sequence belongs to the HisA/HisF family. Heterodimer of HisH and HisF.

It localises to the cytoplasm. It catalyses the reaction 5-[(5-phospho-1-deoxy-D-ribulos-1-ylimino)methylamino]-1-(5-phospho-beta-D-ribosyl)imidazole-4-carboxamide + L-glutamine = D-erythro-1-(imidazol-4-yl)glycerol 3-phosphate + 5-amino-1-(5-phospho-beta-D-ribosyl)imidazole-4-carboxamide + L-glutamate + H(+). It participates in amino-acid biosynthesis; L-histidine biosynthesis; L-histidine from 5-phospho-alpha-D-ribose 1-diphosphate: step 5/9. IGPS catalyzes the conversion of PRFAR and glutamine to IGP, AICAR and glutamate. The HisF subunit catalyzes the cyclization activity that produces IGP and AICAR from PRFAR using the ammonia provided by the HisH subunit. The protein is Imidazole glycerol phosphate synthase subunit HisF of Thermotoga sp. (strain RQ2).